Reading from the N-terminus, the 575-residue chain is Lysine--tRNA ligase (575 aa).

Mg(2+)-binding residues include Glu412 and Glu419.

This sequence belongs to the class-II aminoacyl-tRNA synthetase family. As to quaternary structure, homodimer. Mg(2+) is required as a cofactor.

The protein resides in the cytoplasm. It carries out the reaction tRNA(Lys) + L-lysine + ATP = L-lysyl-tRNA(Lys) + AMP + diphosphate. This is Lysine--tRNA ligase from Bacteroides fragilis (strain ATCC 25285 / DSM 2151 / CCUG 4856 / JCM 11019 / LMG 10263 / NCTC 9343 / Onslow / VPI 2553 / EN-2).